We begin with the raw amino-acid sequence, 341 residues long: Small ribosomal subunit biogenesis GTPase RsgA (341 aa).

The region spanning 112-268 (RQQLIAANLD…LIDTPGMREL (157 aa)) is the CP-type G domain. GTP is bound by residues 157-160 (TKVD) and 210-218 (GSSGAGKST). Residues C290, C295, H297, and C303 each coordinate Zn(2+).

Belongs to the TRAFAC class YlqF/YawG GTPase family. RsgA subfamily. In terms of assembly, monomer. Associates with 30S ribosomal subunit, binds 16S rRNA. Requires Zn(2+) as cofactor.

The protein localises to the cytoplasm. One of several proteins that assist in the late maturation steps of the functional core of the 30S ribosomal subunit. Helps release RbfA from mature subunits. May play a role in the assembly of ribosomal proteins into the subunit. Circularly permuted GTPase that catalyzes slow GTP hydrolysis, GTPase activity is stimulated by the 30S ribosomal subunit. This is Small ribosomal subunit biogenesis GTPase RsgA from Xylella fastidiosa (strain 9a5c).